Here is a 361-residue protein sequence, read N- to C-terminus: Probable dual-specificity RNA methyltransferase RlmN (361 aa).

E99 serves as the catalytic Proton acceptor. One can recognise a Radical SAM core domain in the interval 105–342 (GPNRMTACVS…VTIRKSYGTP (238 aa)). Cysteines 112 and 347 form a disulfide. Residues C119, C123, and C126 each coordinate [4Fe-4S] cluster. S-adenosyl-L-methionine-binding positions include 171-172 (GE), S204, 227-229 (SLH), and N304. The S-methylcysteine intermediate role is filled by C347.

Belongs to the radical SAM superfamily. RlmN family. Requires [4Fe-4S] cluster as cofactor.

The protein resides in the cytoplasm. It catalyses the reaction adenosine(2503) in 23S rRNA + 2 reduced [2Fe-2S]-[ferredoxin] + 2 S-adenosyl-L-methionine = 2-methyladenosine(2503) in 23S rRNA + 5'-deoxyadenosine + L-methionine + 2 oxidized [2Fe-2S]-[ferredoxin] + S-adenosyl-L-homocysteine. The enzyme catalyses adenosine(37) in tRNA + 2 reduced [2Fe-2S]-[ferredoxin] + 2 S-adenosyl-L-methionine = 2-methyladenosine(37) in tRNA + 5'-deoxyadenosine + L-methionine + 2 oxidized [2Fe-2S]-[ferredoxin] + S-adenosyl-L-homocysteine. Functionally, specifically methylates position 2 of adenine 2503 in 23S rRNA and position 2 of adenine 37 in tRNAs. In Chlorobium luteolum (strain DSM 273 / BCRC 81028 / 2530) (Pelodictyon luteolum), this protein is Probable dual-specificity RNA methyltransferase RlmN.